A 966-amino-acid polypeptide reads, in one-letter code: Polycystin-2 (966 aa).

Positions Met-1–Gly-106 are disordered. Topologically, residues Met-1–Ser-217 are cytoplasmic. Residues Val-30 to Glu-44 are compositionally biased toward gly residues. Residues Arg-46–Arg-56 show a composition bias toward basic and acidic residues. The span at Ala-58–Ser-79 shows a compositional bias: low complexity. Ser-72 and Ser-76 each carry phosphoserine. Residues Glu-91–Glu-105 are compositionally biased toward acidic residues. An Omega-N-methylarginine modification is found at Arg-135. The disordered stretch occupies residues His-147–Glu-179. The chain crosses the membrane as a helical span at residues Val-218 to Met-239. Residues Met-240–Ala-466 lie on the Extracellular side of the membrane. N-linked (GlcNAc...) asparagine glycosylation is found at Asn-297, Asn-303, and Asn-326. The cysteines at positions 329 and 342 are disulfide-linked. Asn-360 and Asn-373 each carry an N-linked (GlcNAc...) asparagine glycan. The helical transmembrane segment at Phe-467 to Val-487 threads the bilayer. Over Glu-488–Ser-503 the chain is Cytoplasmic. A helical transmembrane segment spans residues Phe-504–Ile-524. Residues Tyr-525–Ala-550 lie on the Extracellular side of the membrane. Residues Tyr-551–Leu-571 form a helical membrane-spanning segment. Gln-555 contacts cholesterol. At Phe-572–Leu-595 the chain is on the cytoplasmic side. A helical membrane pass occupies residues Phe-596–Phe-617. Residues Gly-618–Glu-629 lie on the Extracellular side of the membrane. The segment at residues Cys-630 to Phe-644 is an intramembrane region (pore-forming). Residue Leu-639 coordinates Ca(2+). The Selectivity filter motif lies at Leu-639–Asp-641. Residues Ala-645–Arg-652 lie on the Extracellular side of the membrane. The helical transmembrane segment at Val-653–Met-673 threads the bilayer. Over Phe-674 to Ala-966 the chain is Cytoplasmic. One can recognise an EF-hand domain in the interval His-748–Glu-783. 5 residues coordinate Ca(2+): Asp-761, Asp-763, Asp-765, Glu-767, and Glu-772. A disordered region spans residues Gly-764–Ile-828. Over residues Leu-768–Ser-793 the composition is skewed to basic and acidic residues. The span at Leu-794–Arg-805 shows a compositional bias: low complexity. Ser-799, Ser-806, Ser-810, and Ser-827 each carry phosphoserine. The tract at residues Arg-801–His-820 is linker. The segment at Asp-808–Gly-819 is important for interaction with PACS1 and PACS2. The stretch at Gly-831–Arg-870 forms a coiled coil. A disordered region spans residues Trp-914–Ala-966. A compositionally biased stretch (polar residues) spans Ala-919 to Val-931.

It belongs to the polycystin family. As to quaternary structure, homotetramer. Component of the heterotetrameric polycystin channel complex with PKD1; the tetramer contains one PKD1 chain and three PKD2 chains. Interaction with PKD1 is required for ciliary localization. Isoform 1 interacts with PKD1 while isoform 3 does not. Interacts with PKD1L1. Interacts with CD2AP. Interacts with HAX1. Interacts with NEK8. Part of a complex containing AKAP5, ADCY5, ADCY6 and PDE4C. Interacts (via C-terminus) with TRPV4 (via C-terminus). Interacts (via C-terminal acidic region) with PACS1 and PACS2; these interactions retain the protein in the endoplasmic reticulum and prevent trafficking to the cell membrane. Interacts with TMEM33; enhancing its opening at the ER membrane. Interacts with TMEM120A; TMEM120A inhibits PKD2 channel activity through the physical association of PKD2 with TMEM120A. Interacts (via N-terminus) with RYR2; regulates RYR2 channel activity. Post-translationally, N-glycosylated. The four subunits in a tetramer probably differ in the extent of glycosylation; simultaneous glycosylation of all experimentally validated sites would probably create steric hindrance. In terms of processing, sumoylated by SUMO1; sumoylation regulates PKD2 membrane recycling and is necessary for intravascular pressure-induced arterial contractility. Phosphorylated. Phosphorylation is important for protein function; a mutant that lacks the N-terminal phosphorylation sites cannot complement a zebrafish pkd2-deficient mutant. PKD-mediated phosphorylation at the C-terminus regulates its function in the release of Ca(2+) stores from the endoplasmic reticulum. Phosphorylation at Ser-810 regulates PKD2 trafficking. Phosphorylation at Ser-72 is required for PKD2 trafficking to or retention at the lateral plasma membrane. Phosphorylation at Ser-799, Ser-810 and Ser-827 regulates PKD2 channel activity. As to expression, detected in kidney epithelium (at protein level). Highly expressed on basolateral membranes in distal convoluted tubules and medullary thick ascending limbs of Henle. Detected at much lower levels in cortical and medullary collecting tubules, and not detected in the glomerular tuft, in thin limbs of Henle, interstitium and blood vessels (at protein level). Expressed in mesenchymally derived structures in the developing embryo at day 12.5. Isoform 1 is predominantly expressed in kidney at all developmental stages with high levels also detected in lung. Isoform 3 shows highest expression in brain with lower expression in kidney and lung, low levels in thymus and is hardly detectable in liver.

It is found in the cell projection. The protein resides in the cilium membrane. The protein localises to the cell membrane. Its subcellular location is the basolateral cell membrane. It localises to the cytoplasmic vesicle membrane. It is found in the endoplasmic reticulum membrane. The protein resides in the golgi apparatus. The protein localises to the vesicle. Its subcellular location is the secreted. It localises to the extracellular exosome. It catalyses the reaction K(+)(in) = K(+)(out). It carries out the reaction Na(+)(in) = Na(+)(out). The enzyme catalyses Ca(2+)(in) = Ca(2+)(out). With respect to regulation, channel activity is regulated by phosphorylation. The channel is activated by increased cytoplasmic Ca(2+) (in the uM range) and by membrane depolarization. TMEM120A inhibits the channel activity of PKD2, and mediates mechanosensitivity of the PKD2-TMEM120A channel complex. At the endoplasmic reticulum membrane (ER), TMEM33 enhances its channel activity. PKD1/ PKD2 complex on the plasma membrane is activated by PKD1 N-terminus. Its function is as follows. Forms a nonselective cation channel. Can function as a homotetrameric ion channel or can form heteromer with PKD1. Displays distinct function depending on its subcellular localization and regulation by its binding partners. Functions as a cation channel, with a preference for monovalent cations over divalent cations that allows K(+), Na(+) and Ca(2+) influx, with low selectivity for Ca(2+). Involved in fluid-flow mechanosensation by the primary cilium in renal epithelium. In the endoplasmic reticulum, likely functions as a K(+) channel to facilitate Ca(2+) release. The heterotetrameric PKD1/PKD2 channel has higher Ca(2+) permeability than homomeric PKD2 channel and acts as a primarily Ca(2+)-permeable channel. PKD1 and PKD2 may function through a common signaling pathway that is necessary to maintain the normal, differentiated state of renal tubule cells. Interacts with and acts as a regulator of a number of other channels, such as TRPV4, TRPC1, IP3R, RYR2, ultimately further affecting intracellular signaling, to modulate intracellular Ca(2+) signaling. Together with TRPV4, forms mechano- and thermosensitive channels in cilium. In cardiomyocytes, PKD2 modulates Ca(2+) release from stimulated RYR2 receptors through direct association. Also involved in left-right axis specification via its role in sensing nodal flow; forms a complex with PKD1L1 in cilia to facilitate flow detection in left-right patterning. Acts as a regulator of cilium length together with PKD1. Mediates systemic blood pressure and contributes to the myogenic response in cerebral arteries though vasoconstriction. The polypeptide is Polycystin-2 (Mus musculus (Mouse)).